The following is a 604-amino-acid chain: Beta-alanine transporter (604 aa).

Over 1-23 (MDFDEVLREVGSFGLYQKVIICS) the chain is Cytoplasmic. The chain crosses the membrane as a helical span at residues 24 to 44 (VLLPAALPCAFHAYSQLFIAA). At 45-151 (TPQHFCRVPE…QEWNLVCDRS (107 aa)) the chain is on the extracellular side. Residues asparagine 68 and asparagine 88 are each glycosylated (N-linked (GlcNAc...) asparagine). The chain crosses the membrane as a helical span at residues 152–172 (FLVTLALVVFGVGGLLGNYVF). The Cytoplasmic segment spans residues 173–182 (GYLVDLWGRR). Residues 183-203 (PSFYAYLLLEIIACAASAFAW) traverse the membrane as a helical segment. Topologically, residues 204 to 212 (NYYTWLGLR) are extracellular. Residues 213–233 (FVVGLTVPAILASPYVLAIEL) form a helical membrane-spanning segment. The Cytoplasmic segment spans residues 234–243 (VGPERRVFCT). Residues 244–264 (IVSNIAYSLGLVVLAGVIYIV) form a helical membrane-spanning segment. The Extracellular portion of the chain corresponds to 265 to 268 (RDWR). A helical membrane pass occupies residues 269–289 (ELSLAVSMPLLMLFSCFFVLP). Over 290 to 362 (ESPRWLMAVG…FRGPNMRRKT (73 aa)) the chain is Cytoplasmic. Residues 363–383 (LIITLIWFANTSVYVGLSYYA) form a helical membrane-spanning segment. Residues 384–390 (PALGGDE) lie on the Extracellular side of the membrane. Residues 391–411 (IWNFFLAGAVELPTYLLLWPG) traverse the membrane as a helical segment. Over 412 to 418 (LSYFGRR) the chain is Cytoplasmic. A helical transmembrane segment spans residues 419–439 (WILFISMLVGGVACVATFLYP). Over 440–442 (DIT) the chain is Extracellular. Residues 443-463 (LLLYCVGKMGISSSFVVLPLM) traverse the membrane as a helical segment. The Cytoplasmic portion of the chain corresponds to 464–473 (ASELYPTVVR). The chain crosses the membrane as a helical span at residues 474–494 (GLGMSFSSVISMVGPIVIPMI). At 495 to 501 (NHMGQQM) the chain is on the extracellular side. The chain crosses the membrane as a helical span at residues 502 to 522 (LVLPLIVMGALLILGGFASLL). The Cytoplasmic portion of the chain corresponds to 523-604 (LPETRNRNLP…SICKNEMRTL (82 aa)).

Belongs to the major facilitator (TC 2.A.1) superfamily. Organic cation transporter (TC 2.A.1.19) family. As to expression, expressed in the head and predominantly in the retinal pigment cells of the compound eye.

It is found in the cell membrane. Its function is as follows. Beta-alanine transporter required for the uptake of beta-alanine by the glia. Required for the recycling process of the neurotransmitter histamine in photoreceptor neurons of the compound eye and therefore for photoreceptor synaptic transmission. Following histamine release from photoreceptors and its uptake by glia, histamine is conjugated to beta-alanine by e/Ebony to form the inactive metabolite, carcinine. The polypeptide is Beta-alanine transporter (Drosophila melanogaster (Fruit fly)).